The primary structure comprises 1318 residues: Tetratricopeptide repeat protein 41 (1318 aa).

TPR repeat units follow at residues 401–434 (PRLE…KPCI), 653–686 (WIQE…PVRE), 819–852 (GRII…LLQS), 860–893 (LRAQ…LLRF), 993–1029 (MEFL…KEKA), and 1047–1084 (SDTL…RAAH). Residues 1295 to 1318 (KPGFPRRSQIESKLLKTSDDPNKE) are disordered. A compositionally biased stretch (basic and acidic residues) spans 1302–1318 (SQIESKLLKTSDDPNKE).

As to expression, highly expressed in lung and myeloid leukemia cell line (at protein level). Isoform 4: expressed in heart (at protein level).

The protein localises to the cytoplasm. This chain is Tetratricopeptide repeat protein 41, found in Mus musculus (Mouse).